Here is a 245-residue protein sequence, read N- to C-terminus: UPF0319 protein VV0984 (245 aa).

Positions 1 to 20 are cleaved as a signal peptide; sequence MRYIGKWMMLGALVSSSVFA.

The protein belongs to the UPF0319 family.

This Vibrio vulnificus (strain YJ016) protein is UPF0319 protein VV0984.